The primary structure comprises 95 residues: Protein TusB (95 aa).

It belongs to the DsrH/TusB family. As to quaternary structure, heterohexamer, formed by a dimer of trimers. The hexameric TusBCD complex contains 2 copies each of TusB, TusC and TusD. The TusBCD complex interacts with TusE.

The protein resides in the cytoplasm. Part of a sulfur-relay system required for 2-thiolation of 5-methylaminomethyl-2-thiouridine (mnm(5)s(2)U) at tRNA wobble positions. The protein is Protein TusB of Buchnera aphidicola subsp. Acyrthosiphon pisum (strain 5A).